The sequence spans 426 residues: 5-methylthioadenosine/S-adenosylhomocysteine deaminase (426 aa).

Residues H60 and H62 each coordinate Zn(2+). Substrate-binding residues include E89 and H179. A Zn(2+)-binding site is contributed by H206. Substrate contacts are provided by E209 and D294. Position 294 (D294) interacts with Zn(2+).

The protein belongs to the metallo-dependent hydrolases superfamily. MTA/SAH deaminase family. It depends on Zn(2+) as a cofactor.

The enzyme catalyses S-adenosyl-L-homocysteine + H2O + H(+) = S-inosyl-L-homocysteine + NH4(+). The catalysed reaction is S-methyl-5'-thioadenosine + H2O + H(+) = S-methyl-5'-thioinosine + NH4(+). Catalyzes the deamination of 5-methylthioadenosine and S-adenosyl-L-homocysteine into 5-methylthioinosine and S-inosyl-L-homocysteine, respectively. Is also able to deaminate adenosine. The protein is 5-methylthioadenosine/S-adenosylhomocysteine deaminase of Dictyoglomus turgidum (strain DSM 6724 / Z-1310).